The chain runs to 274 residues: Formamidopyrimidine-DNA glycosylase (274 aa).

P2 acts as the Schiff-base intermediate with DNA in catalysis. E3 serves as the catalytic Proton donor. K59 (proton donor; for beta-elimination activity) is an active-site residue. DNA-binding residues include H93, R112, and K153. Residues 238 to 272 (QVHTKFNKPCPNCGELIQKIKLGGRGTYFCKKCQQ) form an FPG-type zinc finger. R262 serves as the catalytic Proton donor; for delta-elimination activity.

The protein belongs to the FPG family. Monomer. The cofactor is Zn(2+).

The enzyme catalyses Hydrolysis of DNA containing ring-opened 7-methylguanine residues, releasing 2,6-diamino-4-hydroxy-5-(N-methyl)formamidopyrimidine.. The catalysed reaction is 2'-deoxyribonucleotide-(2'-deoxyribose 5'-phosphate)-2'-deoxyribonucleotide-DNA = a 3'-end 2'-deoxyribonucleotide-(2,3-dehydro-2,3-deoxyribose 5'-phosphate)-DNA + a 5'-end 5'-phospho-2'-deoxyribonucleoside-DNA + H(+). In terms of biological role, involved in base excision repair of DNA damaged by oxidation or by mutagenic agents. Acts as a DNA glycosylase that recognizes and removes damaged bases. Has a preference for oxidized purines, such as 7,8-dihydro-8-oxoguanine (8-oxoG). Has AP (apurinic/apyrimidinic) lyase activity and introduces nicks in the DNA strand. Cleaves the DNA backbone by beta-delta elimination to generate a single-strand break at the site of the removed base with both 3'- and 5'-phosphates. The sequence is that of Formamidopyrimidine-DNA glycosylase from Mycoplasma mobile (strain ATCC 43663 / 163K / NCTC 11711) (Mesomycoplasma mobile).